The following is a 255-amino-acid chain: Large ribosomal subunit protein uL4 (255 aa).

Belongs to the universal ribosomal protein uL4 family. As to quaternary structure, part of the 50S ribosomal subunit.

One of the primary rRNA binding proteins, this protein initially binds near the 5'-end of the 23S rRNA. It is important during the early stages of 50S assembly. It makes multiple contacts with different domains of the 23S rRNA in the assembled 50S subunit and ribosome. Its function is as follows. Forms part of the polypeptide exit tunnel. The polypeptide is Large ribosomal subunit protein uL4 (Pyrococcus furiosus (strain ATCC 43587 / DSM 3638 / JCM 8422 / Vc1)).